The following is a 442-amino-acid chain: Transcriptional coactivator YAP1 (442 aa).

Phosphoserine; by LATS1 and LATS2 occurs at positions 21, 69, and 87. Disordered stretches follow at residues 51–89 and 97–116; these read LPDS…HSSP and VSPG…QHLR. S119 bears the Phosphoserine; by LATS1 and LATS2 mark. WW domains lie at 126–159 and 186–219; these read MPLP…DPRK and GPLP…DPRL. A disordered region spans residues 230–254; the sequence is ISQSAPVKQGSQLPSSPQSGVMSGN. A compositionally biased stretch (low complexity) spans 238-249; sequence QGSQLPSSPQSG. The interval 247-442 is transactivation domain; the sequence is QSGVMSGNNP…IDKENFLTWL (196 aa). Residues 258–279 are a coiled coil; that stretch reads RLQQIHIEKERLRIKQELLRQR. Residues 286 to 374 form a disordered region; sequence RNQLPTSMEQ…DTLGPGSMAT (89 aa). Composition is skewed to polar residues over residues 288–304, 313–329, and 337–347; these read QLPT…NPVS, RNMT…SGTY, and DSGLSMSSYSV.

The protein belongs to the YAP1 family. Phosphorylated by lats1 and lats2; leading to cytoplasmic translocation and inactivation. Expressed in the notochord, brain, eyes, branchial arches and pectoral fins.

Its subcellular location is the cytoplasm. The protein resides in the nucleus. It localises to the cell junction. It is found in the tight junction. The protein localises to the cell membrane. Its function is as follows. Transcriptional regulator which can act both as a coactivator and a corepressor and is the critical downstream regulatory target in the Hippo signaling pathway that plays a pivotal role in organ size control and tumor suppression by restricting proliferation and promoting apoptosis. Required for expansion of the neural plate and neural plate border zone progenitor pools. Acts as a direct regulator of pax3 expression via interaction with tead1. Plays a key role in tissue tension and 3D tissue shape by regulating cortical actomyosin network formation. This is Transcriptional coactivator YAP1 (yap1) from Danio rerio (Zebrafish).